A 238-amino-acid chain; its full sequence is Ras association domain-containing protein 3 (238 aa).

N-acetylserine is present on Ser-2. Residues 26–48 form a disordered region; sequence RAPQGKPRSGQQDVEKEKETHSY. Residues 38–48 show a composition bias toward basic and acidic residues; the sequence is DVEKEKETHSY. Residues 79–186 form the Ras-associating domain; the sequence is YTGFIKVQME…TLSFVLREHE (108 aa). Residues 187-234 form the SARAH domain; sequence IGEWEAFSLPELQNFLRILDKEEDEQLQNLKRRYTAYRQKLEEALREV.

Widely expressed.

The protein localises to the cytoplasm. The protein resides in the cytoskeleton. The protein is Ras association domain-containing protein 3 (RASSF3) of Homo sapiens (Human).